The sequence spans 79 residues: MDVKAEVIEIIDELFMEDVSDMMDEDLFDAGVLDSMGTVELIVELENRFDIRVPVSEFGRDDWNTANKIVEGVTELRNA.

The Carrier domain occupies 1 to 77; it reads MDVKAEVIEI…KIVEGVTELR (77 aa). Ser-35 carries the post-translational modification O-(pantetheine 4'-phosphoryl)serine.

Belongs to the DltC family. In terms of processing, 4'-phosphopantetheine is transferred from CoA to a specific serine of apo-DCP.

The protein localises to the cytoplasm. It participates in cell wall biogenesis; lipoteichoic acid biosynthesis. Carrier protein involved in the D-alanylation of lipoteichoic acid (LTA). The loading of thioester-linked D-alanine onto DltC is catalyzed by D-alanine--D-alanyl carrier protein ligase DltA. The DltC-carried D-alanyl group is further transferred to cell membrane phosphatidylglycerol (PG) by forming an ester bond, probably catalyzed by DltD. D-alanylation of LTA plays an important role in modulating the properties of the cell wall in Gram-positive bacteria, influencing the net charge of the cell wall. This is D-alanyl carrier protein from Streptococcus gordonii (strain Challis / ATCC 35105 / BCRC 15272 / CH1 / DL1 / V288).